The sequence spans 569 residues: Arginine--tRNA ligase (569 aa).

The 'HIGH' region signature appears at 123 to 133 (ANPNGPLHVGH).

This sequence belongs to the class-I aminoacyl-tRNA synthetase family.

Its subcellular location is the cytoplasm. The enzyme catalyses tRNA(Arg) + L-arginine + ATP = L-arginyl-tRNA(Arg) + AMP + diphosphate. In Methanosarcina barkeri (strain Fusaro / DSM 804), this protein is Arginine--tRNA ligase.